The sequence spans 761 residues: T-box protein 1 (761 aa).

Disordered stretches follow at residues methionine 1 to threonine 85 and glutamine 167 to proline 210. Polar residues-rich tracts occupy residues aspartate 37–glycine 61 and glutamine 167–alanine 179. Low complexity-rich tracts occupy residues serine 180 to serine 191 and serine 198 to proline 210. The segment at residues leucine 287–aspartate 456 is a DNA-binding region (T-box). The segment covering threonine 496–asparagine 510 has biased composition (polar residues). Disordered stretches follow at residues threonine 496–glycine 515, serine 545–histidine 612, and valine 637–threonine 687. Residues glycine 600 to histidine 612 are compositionally biased toward basic and acidic residues. A compositionally biased stretch (polar residues) spans valine 637–aspartate 646. The segment covering serine 656–threonine 687 has biased composition (low complexity).

Its subcellular location is the nucleus. Functionally, probable transcriptional regulator involved in developmental processes. The protein is T-box protein 1 (tbr1) of Patiria pectinifera (Starfish).